The sequence spans 464 residues: Kynureninase (464 aa).

Residue M1 is modified to N-acetylmethionine. Pyridoxal 5'-phosphate is bound by residues L137, T138, 165-168 (FPSD), S221, D250, H253, and Y275. K276 carries the post-translational modification N6-(pyridoxal phosphate)lysine. 2 residues coordinate pyridoxal 5'-phosphate: W305 and N333.

Belongs to the kynureninase family. Homodimer. The cofactor is pyridoxal 5'-phosphate.

The protein localises to the cytoplasm. Its subcellular location is the cytosol. The catalysed reaction is L-kynurenine + H2O = anthranilate + L-alanine + H(+). It catalyses the reaction 3-hydroxy-L-kynurenine + H2O = 3-hydroxyanthranilate + L-alanine + H(+). The protein operates within amino-acid degradation; L-kynurenine degradation; L-alanine and anthranilate from L-kynurenine: step 1/1. It functions in the pathway cofactor biosynthesis; NAD(+) biosynthesis; quinolinate from L-kynurenine: step 2/3. In terms of biological role, catalyzes the cleavage of L-kynurenine (L-Kyn) and L-3-hydroxykynurenine (L-3OHKyn) into anthranilic acid (AA) and 3-hydroxyanthranilic acid (3-OHAA), respectively. Has a preference for the L-3-hydroxy form. Also has cysteine-conjugate-beta-lyase activity. The chain is Kynureninase (Kynu) from Mus musculus (Mouse).